A 301-amino-acid polypeptide reads, in one-letter code: UPF0282 protein Pcal_1546 (301 aa).

Belongs to the UPF0282 family.

This chain is UPF0282 protein Pcal_1546, found in Pyrobaculum calidifontis (strain DSM 21063 / JCM 11548 / VA1).